We begin with the raw amino-acid sequence, 384 residues long: H-2 class I histocompatibility antigen, TLA(B) alpha chain (384 aa).

The signal sequence occupies residues 1-26; the sequence is MRMGTPVPGTLLILLAASQGQTQTCP. The interval 27-116 is alpha-1; the sequence is GSHSLRYFYT…MLDYYNLSQN (90 aa). The Extracellular portion of the chain corresponds to 27–314; sequence GSHSLRYFYT…TSMPNRTTVR (288 aa). N-linked (GlcNAc...) asparagine glycans are attached at residues asparagine 63, asparagine 112, and asparagine 116. The alpha-2 stretch occupies residues 117–208; the sequence is GSHTIQVMYG…ENRKKTQECT (92 aa). Cystine bridges form between cysteine 127–cysteine 190 and cysteine 229–cysteine 285. The interval 209-300 is alpha-3; that stretch reads DPPKTHVTHH…GLPEPLTLRW (92 aa). In terms of domain architecture, Ig-like C1-type spans 211–299; that stretch reads PKTHVTHHPR…EGLPEPLTLR (89 aa). The segment at 301 to 314 is connecting peptide; it reads EPPQTSMPNRTTVR. Asparagine 309 is a glycosylation site (N-linked (GlcNAc...) asparagine). The chain crosses the membrane as a helical span at residues 315–334; it reads ALLGAMIILGFMSGSVMMWM. Residues 335-384 are Cytoplasmic-facing; sequence RKNNGGNGDDNTAAYQNEREHLSLDPRAESEALGVEAGMKDLPSAPPLVS. The span at 354–364 shows a compositional bias: basic and acidic residues; it reads EHLSLDPRAES. The tract at residues 354–384 is disordered; the sequence is EHLSLDPRAESEALGVEAGMKDLPSAPPLVS.

The protein belongs to the MHC class I family. Heterodimer of an alpha chain and a beta chain (beta-2-microglobulin). TL antigens are only expressed on thymocytes, activated T-lymphocytes and on some thymic leukemias.

The protein localises to the membrane. Involved in the presentation of foreign antigens to the immune system. In Mus musculus (Mouse), this protein is H-2 class I histocompatibility antigen, TLA(B) alpha chain (H2-T3).